The following is a 1106-amino-acid chain: Carbamoyl phosphate synthase large chain (1106 aa).

Residues 1-402 form a carboxyphosphate synthetic domain region; that stretch reads MPKREDLKSV…ALQKALRSLE (402 aa). ATP is bound by residues arginine 129, arginine 169, glycine 175, glycine 176, glutamate 208, isoleucine 210, glutamate 215, glycine 241, valine 242, histidine 243, glutamine 285, and glutamate 299. The ATP-grasp 1 domain occupies 133-328; the sequence is KGVVERCGAE…IAKIATKLSL (196 aa). Glutamine 285, glutamate 299, and asparagine 301 together coordinate Mg(2+). Residues glutamine 285, glutamate 299, and asparagine 301 each contribute to the Mn(2+) site. The segment at 403-546 is oligomerization domain; the sequence is QKGSQLDFGS…YHYSSYDQED (144 aa). Residues 547 to 956 form a carbamoyl phosphate synthetic domain region; it reads EIALHEKPSV…AFAKSQAAAN (410 aa). The ATP-grasp 2 domain maps to 677–868; the sequence is ARVLDIAGLI…LAKAAALIGT (192 aa). Positions 713, 752, 754, 759, 784, 785, 786, 787, 827, and 839 each coordinate ATP. 3 residues coordinate Mg(2+): glutamine 827, glutamate 839, and asparagine 841. Residues glutamine 827, glutamate 839, and asparagine 841 each contribute to the Mn(2+) site. In terms of domain architecture, MGS-like spans 957-1106; sequence NALPTEGKVF…EALLEAAANV (150 aa). Residues 957 to 1106 form an allosteric domain region; that stretch reads NALPTEGKVF…EALLEAAANV (150 aa).

It belongs to the CarB family. As to quaternary structure, composed of two chains; the small (or glutamine) chain promotes the hydrolysis of glutamine to ammonia, which is used by the large (or ammonia) chain to synthesize carbamoyl phosphate. Tetramer of heterodimers (alpha,beta)4. The cofactor is Mg(2+). Mn(2+) serves as cofactor.

The catalysed reaction is hydrogencarbonate + L-glutamine + 2 ATP + H2O = carbamoyl phosphate + L-glutamate + 2 ADP + phosphate + 2 H(+). The enzyme catalyses hydrogencarbonate + NH4(+) + 2 ATP = carbamoyl phosphate + 2 ADP + phosphate + 2 H(+). The protein operates within amino-acid biosynthesis; L-arginine biosynthesis; carbamoyl phosphate from bicarbonate: step 1/1. It participates in pyrimidine metabolism; UMP biosynthesis via de novo pathway; (S)-dihydroorotate from bicarbonate: step 1/3. In terms of biological role, large subunit of the glutamine-dependent carbamoyl phosphate synthetase (CPSase). CPSase catalyzes the formation of carbamoyl phosphate from the ammonia moiety of glutamine, carbonate, and phosphate donated by ATP, constituting the first step of 2 biosynthetic pathways, one leading to arginine and/or urea and the other to pyrimidine nucleotides. The large subunit (synthetase) binds the substrates ammonia (free or transferred from glutamine from the small subunit), hydrogencarbonate and ATP and carries out an ATP-coupled ligase reaction, activating hydrogencarbonate by forming carboxy phosphate which reacts with ammonia to form carbamoyl phosphate. This Renibacterium salmoninarum (strain ATCC 33209 / DSM 20767 / JCM 11484 / NBRC 15589 / NCIMB 2235) protein is Carbamoyl phosphate synthase large chain.